Reading from the N-terminus, the 361-residue chain is Solute carrier family 25 member 3 (361 aa).

A mitochondrion-targeting transit peptide spans 1-49 (MFSSVAHLARANPFNTPHLQLVHDGLGDFRSRPPGPTGQPRRPRNLAAA). A disordered region spans residues 25 to 44 (GLGDFRSRPPGPTGQPRRPR). The Mitochondrial intermembrane segment spans residues 50-62 (AVEEYSCEFGSAK). Solcar repeat units lie at residues 62 to 146 (KYYA…FKVL), 159 to 243 (WRTS…TVEA), and 260 to 338 (EQLV…VKVY). A helical membrane pass occupies residues 63 to 85 (YYALCGFGGVLSCGLTHTAVVPL). Topologically, residues 86 to 120 (DLVKCRMQVDPQKYKGIFNGFSVTLKEDGVRGLAK) are mitochondrial matrix. K98 carries the N6-acetyllysine modification. K111 is modified (N6-methyllysine). Residues 121–140 (GWAPTFLGYSMQGLCKFGFY) traverse the membrane as a helical segment. Residues 141 to 160 (EVFKVLYSNMLGEENTYLWR) are Mitochondrial intermembrane-facing. Residues 161–182 (TSLYLAASASAEFFADIALAPM) traverse the membrane as a helical segment. Residues 183-217 (EAAKVRIQTQPGYANTLRDAAPKMYKEEGLKAFYK) are Mitochondrial matrix-facing. At Y195 the chain carries Phosphotyrosine. K208 bears the N6-acetyllysine mark. Residues 218 to 237 (GVAPLWMRQIPYTMMKFACF) form a helical membrane-spanning segment. Topologically, residues 238 to 260 (ERTVEALYKFVVPKPRSECSKPE) are mitochondrial intermembrane. A helical membrane pass occupies residues 261–283 (QLVVTFVAGYIAGVFCAIVSHPA). Over 284 to 313 (DSVVSVLNKEKGSSASLVLKRLGFKGVWKG) the chain is Mitochondrial matrix. The helical transmembrane segment at 314 to 332 (LFARIIMIGTLTALQWFIY) threads the bilayer. Over 333 to 361 (DSVKVYFRLPRPPPPEMPESLKKKLGLTQ) the chain is Mitochondrial intermembrane.

The protein belongs to the mitochondrial carrier (TC 2.A.29) family. As to quaternary structure, interacts with PPIF; the interaction is impaired by CsA.

The protein localises to the mitochondrion inner membrane. It carries out the reaction phosphate(in) + H(+)(in) = phosphate(out) + H(+)(out). Functionally, inorganic ion transporter that transports phosphate or copper ions across the mitochondrial inner membrane into the matrix compartment. Mediates proton-coupled symport of phosphate ions necessary for mitochondrial oxidative phosphorylation of ADP to ATP. Transports copper ions probably in the form of anionic copper(I) complexes to maintain mitochondrial matrix copper pool and to supply copper for cytochrome C oxidase complex assembly. May also play a role in regulation of the mitochondrial permeability transition pore (mPTP). The chain is Solute carrier family 25 member 3 from Pongo abelii (Sumatran orangutan).